Here is a 37-residue protein sequence, read N- to C-terminus: Large ribosomal subunit protein bL36 (37 aa).

This sequence belongs to the bacterial ribosomal protein bL36 family.

The polypeptide is Large ribosomal subunit protein bL36 (Nocardia farcinica (strain IFM 10152)).